The primary structure comprises 458 residues: UDP-N-acetylglucosamine 1-carboxyvinyltransferase (458 aa).

A phosphoenolpyruvate-binding site is contributed by 34–35 (KN). Arg104 lines the UDP-N-acetyl-alpha-D-glucosamine pocket. Cys128 serves as the catalytic Proton donor. At Cys128 the chain carries 2-(S-cysteinyl)pyruvic acid O-phosphothioketal. The UDP-N-acetyl-alpha-D-glucosamine site is built by Asp320 and Val342.

It belongs to the EPSP synthase family. MurA subfamily.

The protein resides in the cytoplasm. It carries out the reaction phosphoenolpyruvate + UDP-N-acetyl-alpha-D-glucosamine = UDP-N-acetyl-3-O-(1-carboxyvinyl)-alpha-D-glucosamine + phosphate. Its pathway is cell wall biogenesis; peptidoglycan biosynthesis. Its function is as follows. Cell wall formation. Adds enolpyruvyl to UDP-N-acetylglucosamine. The sequence is that of UDP-N-acetylglucosamine 1-carboxyvinyltransferase from Prochlorococcus marinus (strain NATL2A).